A 234-amino-acid polypeptide reads, in one-letter code: Ribonuclease HII (234 aa).

Residues 16 to 207 enclose the RNase H type-2 domain; that stretch reads ALVAGVDEAG…VRRMLTPKAI (192 aa). Residues Asp-22, Glu-23, and Asp-115 each contribute to the a divalent metal cation site.

This sequence belongs to the RNase HII family. It depends on Mn(2+) as a cofactor. The cofactor is Mg(2+).

Its subcellular location is the cytoplasm. The enzyme catalyses Endonucleolytic cleavage to 5'-phosphomonoester.. Its function is as follows. Endonuclease that specifically degrades the RNA of RNA-DNA hybrids. The chain is Ribonuclease HII from Xylella fastidiosa (strain M12).